The following is a 435-amino-acid chain: MQVQLETLSNLERRMNIALPMAAIETQVAERLKRVARGAKIQGFRPGKAPLKIVEMNYGAQVREEVMGEQVQQGFYKAVTEQSLRVAGYPRFEPVAAGDDKESFKFAATFEIYPEVKVGELAGKEIEKPNTVVGDAEIEKTIDILRKQRTRYNRVEREAAEGDRVIIDFKGAIDGVAFEGGSSENFPFVLGQGQMLAEFEAGIVGAKEGDIKTVEVNFPEDYHGKDVAGKTAVFEILVKNVAEATLPEVNEEFAKALGISDGDVEKMRGEIRKNVEREVKRRLQARIKENVMQALIDATELELPKALVSLEIGRLVEQARRDMQQRGMNVKDMPFPPELFAAQAERRVKLGLILSEIVEANKLEAKPEQVRAMITEFADSYEQPEDVLAWYYESADRLEGPTSMVLEDNVVEFVLSQANVVAKDLSFDELMGSQA.

One can recognise a PPIase FKBP-type domain in the interval 162–247; it reads GDRVIIDFKG…VKNVAEATLP (86 aa).

Belongs to the FKBP-type PPIase family. Tig subfamily.

It localises to the cytoplasm. It catalyses the reaction [protein]-peptidylproline (omega=180) = [protein]-peptidylproline (omega=0). Involved in protein export. Acts as a chaperone by maintaining the newly synthesized protein in an open conformation. Functions as a peptidyl-prolyl cis-trans isomerase. This chain is Trigger factor, found in Chromobacterium violaceum (strain ATCC 12472 / DSM 30191 / JCM 1249 / CCUG 213 / NBRC 12614 / NCIMB 9131 / NCTC 9757 / MK).